The chain runs to 159 residues: Ribosomal RNA large subunit methyltransferase H (159 aa).

S-adenosyl-L-methionine contacts are provided by residues L76, G107, and 126–131; that span reads LSKLTM.

This sequence belongs to the RNA methyltransferase RlmH family. As to quaternary structure, homodimer.

The protein resides in the cytoplasm. It catalyses the reaction pseudouridine(1915) in 23S rRNA + S-adenosyl-L-methionine = N(3)-methylpseudouridine(1915) in 23S rRNA + S-adenosyl-L-homocysteine + H(+). Its function is as follows. Specifically methylates the pseudouridine at position 1915 (m3Psi1915) in 23S rRNA. The chain is Ribosomal RNA large subunit methyltransferase H from Acinetobacter baylyi (strain ATCC 33305 / BD413 / ADP1).